The following is a 155-amino-acid chain: Protein YiaL (155 aa).

It belongs to the TabA/YiaL family.

This chain is Protein YiaL (yiaL), found in Escherichia coli (strain K12).